Reading from the N-terminus, the 1269-residue chain is Regulator of nonsense transcripts 2 (1269 aa).

Disordered regions lie at residues 1–125 and 143–162; these read MPAE…EKEE and LRSKNQNAPDNRPEENFFSR. Residues 57-133 are a coiled coil; the sequence is KKRLEEDKRK…EESLQLHQEA (77 aa). The segment at 94 to 132 is sufficient for interaction with UPF1; sequence KKKQEEEERKKQEEQAKRQQEEAAAQLKEKEESLQLHQE. The region spanning 168 to 396 is the MIF4G 1 domain; that stretch reads KKNTAFVKKL…KGELSEDRHK (229 aa). 2 disordered regions span residues 422-444 and 487-518; these read NMPDLPQDKPTPEEHGPGIDIFT and KSQNKDSNKDDSKEAKEPKDNKEASSPDDLEL. Basic and acidic residues-rich tracts occupy residues 427-438 and 487-511; these read PQDKPTPEEHGP and KSQNKDSNKDDSKEAKEPKDNKEAS. MIF4G domains follow at residues 571–755 and 774–984; these read QQLP…YCNP and RKLL…LRPK. Residues 709–926 form a sufficient for interaction with UPF3A and UPF3B region; it reads GRFLFRSPES…IRLVCTILDT (218 aa). Residues 755-1269 form a sufficient for interaction with EIF4A1 and EIF1 region; it reads PPPAEKTVRK…LIFKTGGRRR (515 aa). A binds to UPF3B region spans residues 837–857; sequence EDVGIHVVDGVLEDIRLGMEV. The segment at 1017 to 1090 is disordered; the sequence is SKDSMTEGEN…KENETDEENA (74 aa). Residues 1025 to 1073 are compositionally biased toward acidic residues; it reads ENLEEDEEEEEGGAETEEQSGNESEVNEPEEEEGSEEEEEGEEEEEENT. A sufficient for interaction with UPF1 C-terminus region spans residues 1081–1269; sequence KENETDEENA…LIFKTGGRRR (189 aa). Thr-1085 is modified (phosphothreonine). 2 interaction with UPF1 regions span residues 1102-1126 and 1164-1204; these read VPCVEDEDFIQALDKMMLENLQQRS and DTMP…AEQE. The segment at 1102–1195 is necessary for interaction with UPF1; it reads VPCVEDEDFI…PMSSQLAANH (94 aa). The interval 1218–1269 is disordered; sequence ERQEQEDYQEMLQSLAQRPAPANTNRERRPRYQHPKGAPNADLIFKTGGRRR.

As to quaternary structure, found in a post-splicing messenger ribonucleoprotein (mRNP) complex. Associates with the exon junction complex (EJC). Interacts with SMG1, EST1A, UPF3A, UPF3B, EIF4A1 and EIF1. Interacts with UPF1; interaction is promoted by TDRD6. Interacts with DDX4. As to expression, localized in male germ cells.

The protein localises to the cytoplasm. The protein resides in the perinuclear region. In terms of biological role, involved in nonsense-mediated decay (NMD) of mRNAs containing premature stop codons by associating with the nuclear exon junction complex (EJC). Recruited by UPF3B associated with the EJC core at the cytoplasmic side of the nuclear envelope and the subsequent formation of an UPF1-UPF2-UPF3 surveillance complex (including UPF1 bound to release factors at the stalled ribosome) is believed to activate NMD. In cooperation with UPF3B stimulates both ATPase and RNA helicase activities of UPF1. Binds spliced mRNA. The polypeptide is Regulator of nonsense transcripts 2 (Mus musculus (Mouse)).